The following is a 196-amino-acid chain: MVVILIIDNYDSFTHNLYQLAGEILRDEGMDEEIMVLRNDEARISDLRALDPEKIIISPGPGNPSRRSDFGVCMDVIGEFTDRPLLGVCLGHQGIFHAFGGRVDQGEPVHGKIVEVFHDGSELFRDVPNPFRATRYHSLVCRPEDTPADIEVTAVTSDEIIMAIKHREYPVYGLQFHPESAGTPSGRTVIRNFLRM.

Residues 3–196 form the Glutamine amidotransferase type-1 domain; the sequence is VILIIDNYDS…RTVIRNFLRM (194 aa). 60–62 serves as a coordination point for L-glutamine; the sequence is GPG. Cys-89 serves as the catalytic Nucleophile; for GATase activity. L-glutamine is bound by residues Gln-93 and 138-139; that span reads SL. Active-site for GATase activity residues include His-177 and Glu-179.

As to quaternary structure, heterotetramer consisting of two non-identical subunits: a beta subunit (TrpG) and a large alpha subunit (TrpE).

The catalysed reaction is chorismate + L-glutamine = anthranilate + pyruvate + L-glutamate + H(+). Its pathway is amino-acid biosynthesis; L-tryptophan biosynthesis; L-tryptophan from chorismate: step 1/5. In terms of biological role, part of a heterotetrameric complex that catalyzes the two-step biosynthesis of anthranilate, an intermediate in the biosynthesis of L-tryptophan. In the first step, the glutamine-binding beta subunit (TrpG) of anthranilate synthase (AS) provides the glutamine amidotransferase activity which generates ammonia as a substrate that, along with chorismate, is used in the second step, catalyzed by the large alpha subunit of AS (TrpE) to produce anthranilate. In the absence of TrpG, TrpE can synthesize anthranilate directly from chorismate and high concentrations of ammonia. This chain is Anthranilate synthase component 2 (trpG), found in Methanothermobacter thermautotrophicus (strain ATCC 29096 / DSM 1053 / JCM 10044 / NBRC 100330 / Delta H) (Methanobacterium thermoautotrophicum).